We begin with the raw amino-acid sequence, 156 residues long: ATP synthase subunit b 2 (156 aa).

Residues 6–26 form a helical membrane-spanning segment; that stretch reads SMFGQAISFVIFVWLCMKYVW.

Belongs to the ATPase B chain family. In terms of assembly, F-type ATPases have 2 components, F(1) - the catalytic core - and F(0) - the membrane proton channel. F(1) has five subunits: alpha(3), beta(3), gamma(1), delta(1), epsilon(1). F(0) has three main subunits: a(1), b(2) and c(10-14). The alpha and beta chains form an alternating ring which encloses part of the gamma chain. F(1) is attached to F(0) by a central stalk formed by the gamma and epsilon chains, while a peripheral stalk is formed by the delta and b chains.

Its subcellular location is the cell inner membrane. F(1)F(0) ATP synthase produces ATP from ADP in the presence of a proton or sodium gradient. F-type ATPases consist of two structural domains, F(1) containing the extramembraneous catalytic core and F(0) containing the membrane proton channel, linked together by a central stalk and a peripheral stalk. During catalysis, ATP synthesis in the catalytic domain of F(1) is coupled via a rotary mechanism of the central stalk subunits to proton translocation. Its function is as follows. Component of the F(0) channel, it forms part of the peripheral stalk, linking F(1) to F(0). The sequence is that of ATP synthase subunit b 2 from Vibrio campbellii (strain ATCC BAA-1116).